Here is a 431-residue protein sequence, read N- to C-terminus: Guanine nucleotide exchange factor rei-2 (431 aa).

Over residues 1–21 (MDETATSSEVTETFVSDPTTR) the composition is skewed to polar residues. Residues 1-28 (MDETATSSEVTETFVSDPTTRQFEEDGH) are disordered. Coiled coils occupy residues 149–171 (EVLNHHIQRVREVEEERTAAESL) and 214–247 (LEAQKATILCLEAEVRQKKNDYTTSLRNLERISE). The interval 249–298 (IHEERSTGSLESAVSSDQEDQKSDFKSSESLPGNPPPYAPTAPPPYEDKY) is disordered. Over residues 255 to 264 (TGSLESAVSS) the composition is skewed to polar residues. Residues 281 to 293 (GNPPPYAPTAPPP) show a composition bias toward pro residues.

Belongs to the SH3BP5 family. In terms of assembly, interacts with rab-11.1. Binds preferentially to the GDP-bound form of rab-11.1.

Functionally, guanine nucleotide exchange factor for Rab GTPase Rab-11.1. May spatially and temporally regulate the distribution of Rab-11.1 to target membranes during embryogenesis. May play a role in cytokinesis, probably by targeting rab-11.1 to the cleavage furrows. The sequence is that of Guanine nucleotide exchange factor rei-2 from Caenorhabditis elegans.